We begin with the raw amino-acid sequence, 70 residues long: DNA-directed RNA polymerase subunit epsilon (70 aa).

Belongs to the RNA polymerase subunit epsilon family. In terms of assembly, RNAP is composed of a core of 2 alpha, a beta and a beta' subunit. The core is associated with a delta subunit, and at least one of epsilon or omega. When a sigma factor is associated with the core the holoenzyme is formed, which can initiate transcription.

The catalysed reaction is RNA(n) + a ribonucleoside 5'-triphosphate = RNA(n+1) + diphosphate. Its function is as follows. A non-essential component of RNA polymerase (RNAP). The sequence is that of DNA-directed RNA polymerase subunit epsilon from Bacillus cereus (strain ATCC 14579 / DSM 31 / CCUG 7414 / JCM 2152 / NBRC 15305 / NCIMB 9373 / NCTC 2599 / NRRL B-3711).